Reading from the N-terminus, the 53-residue chain is Light-harvesting protein B-800/850 alpha chain (53 aa).

At 1 to 14 (MNQGKIWTVVNPSV) the chain is on the cytoplasmic side. Residues 15–35 (GLPLLLGSVTVIAILVHAAVL) form a helical membrane-spanning segment. A bacteriochlorophyll is bound at residue His-31. Residues 36 to 53 (SHTTWFPAYWQGGLKKAA) are Periplasmic-facing.

The protein belongs to the antenna complex alpha subunit family. In terms of assembly, the core complex is formed by different alpha and beta chains, binding bacteriochlorophyll molecules, and arranged most probably in tetrameric structures disposed around the reaction center. The non-pigmented gamma chains may constitute additional components.

The protein localises to the cell inner membrane. Antenna complexes are light-harvesting systems, which transfer the excitation energy to the reaction centers. This is Light-harvesting protein B-800/850 alpha chain from Rhodoblastus acidophilus (Rhodopseudomonas acidophila).